We begin with the raw amino-acid sequence, 1057 residues long: Carbamoyl phosphate synthase large chain (1057 aa).

A carboxyphosphate synthetic domain region spans residues M1–E401. ATP contacts are provided by R129, R169, G175, G176, K208, I210, E215, G241, I242, H243, Q284, and E298. The ATP-grasp 1 domain occupies R133–V327. The Mg(2+) site is built by Q284, E298, and N300. Mn(2+) is bound by residues Q284, E298, and N300. Residues Y402–S546 form an oligomerization domain region. The tract at residues I547–G929 is carbamoyl phosphate synthetic domain. The region spanning E671–I861 is the ATP-grasp 2 domain. Residues R707, R746, L748, E752, G777, V778, H779, S780, Q820, and E832 each contribute to the ATP site. 3 residues coordinate Mg(2+): Q820, E832, and N834. 3 residues coordinate Mn(2+): Q820, E832, and N834. Residues V930–M1057 enclose the MGS-like domain. The interval V930–M1057 is allosteric domain.

It belongs to the CarB family. In terms of assembly, composed of two chains; the small (or glutamine) chain promotes the hydrolysis of glutamine to ammonia, which is used by the large (or ammonia) chain to synthesize carbamoyl phosphate. Tetramer of heterodimers (alpha,beta)4. The cofactor is Mg(2+). Mn(2+) serves as cofactor.

It catalyses the reaction hydrogencarbonate + L-glutamine + 2 ATP + H2O = carbamoyl phosphate + L-glutamate + 2 ADP + phosphate + 2 H(+). The catalysed reaction is hydrogencarbonate + NH4(+) + 2 ATP = carbamoyl phosphate + 2 ADP + phosphate + 2 H(+). Its pathway is amino-acid biosynthesis; L-arginine biosynthesis; carbamoyl phosphate from bicarbonate: step 1/1. It functions in the pathway pyrimidine metabolism; UMP biosynthesis via de novo pathway; (S)-dihydroorotate from bicarbonate: step 1/3. Its function is as follows. Large subunit of the glutamine-dependent carbamoyl phosphate synthetase (CPSase). CPSase catalyzes the formation of carbamoyl phosphate from the ammonia moiety of glutamine, carbonate, and phosphate donated by ATP, constituting the first step of 2 biosynthetic pathways, one leading to arginine and/or urea and the other to pyrimidine nucleotides. The large subunit (synthetase) binds the substrates ammonia (free or transferred from glutamine from the small subunit), hydrogencarbonate and ATP and carries out an ATP-coupled ligase reaction, activating hydrogencarbonate by forming carboxy phosphate which reacts with ammonia to form carbamoyl phosphate. The protein is Carbamoyl phosphate synthase large chain of Staphylococcus aureus (strain bovine RF122 / ET3-1).